We begin with the raw amino-acid sequence, 335 residues long: Tryptophan--tRNA ligase (335 aa).

ATP-binding positions include 13 to 15 and 21 to 22; these read QPS and GN. The 'HIGH' region motif lies at 14 to 22; the sequence is PSGNLTIGN. Aspartate 136 lines the L-tryptophan pocket. Residues 148-150, isoleucine 187, and 196-200 contribute to the ATP site; these read GQD and KMSKS. The short motif at 196-200 is the 'KMSKS' region element; sequence KMSKS.

This sequence belongs to the class-I aminoacyl-tRNA synthetase family. As to quaternary structure, homodimer.

It is found in the cytoplasm. The catalysed reaction is tRNA(Trp) + L-tryptophan + ATP = L-tryptophyl-tRNA(Trp) + AMP + diphosphate + H(+). Its function is as follows. Catalyzes the attachment of tryptophan to tRNA(Trp). This chain is Tryptophan--tRNA ligase, found in Buchnera aphidicola subsp. Acyrthosiphon pisum (strain APS) (Acyrthosiphon pisum symbiotic bacterium).